The primary structure comprises 170 residues: Crossover junction endodeoxyribonuclease RuvC (170 aa).

Residues aspartate 8, glutamate 67, and aspartate 139 contribute to the active site. The Mg(2+) site is built by aspartate 8, glutamate 67, and aspartate 139.

Belongs to the RuvC family. Homodimer which binds Holliday junction (HJ) DNA. The HJ becomes 2-fold symmetrical on binding to RuvC with unstacked arms; it has a different conformation from HJ DNA in complex with RuvA. In the full resolvosome a probable DNA-RuvA(4)-RuvB(12)-RuvC(2) complex forms which resolves the HJ. Mg(2+) serves as cofactor.

Its subcellular location is the cytoplasm. It carries out the reaction Endonucleolytic cleavage at a junction such as a reciprocal single-stranded crossover between two homologous DNA duplexes (Holliday junction).. The RuvA-RuvB-RuvC complex processes Holliday junction (HJ) DNA during genetic recombination and DNA repair. Endonuclease that resolves HJ intermediates. Cleaves cruciform DNA by making single-stranded nicks across the HJ at symmetrical positions within the homologous arms, yielding a 5'-phosphate and a 3'-hydroxyl group; requires a central core of homology in the junction. The consensus cleavage sequence is 5'-(A/T)TT(C/G)-3'. Cleavage occurs on the 3'-side of the TT dinucleotide at the point of strand exchange. HJ branch migration catalyzed by RuvA-RuvB allows RuvC to scan DNA until it finds its consensus sequence, where it cleaves and resolves the cruciform DNA. This chain is Crossover junction endodeoxyribonuclease RuvC, found in Pectobacterium atrosepticum (strain SCRI 1043 / ATCC BAA-672) (Erwinia carotovora subsp. atroseptica).